A 166-amino-acid chain; its full sequence is Regulatory protein RecX (166 aa).

It belongs to the RecX family.

It localises to the cytoplasm. Functionally, modulates RecA activity. In Escherichia coli O7:K1 (strain IAI39 / ExPEC), this protein is Regulatory protein RecX.